The primary structure comprises 329 residues: MLSPLNVLQFNFRGETALSDSAPLQTVSFAGKDYSMEPIDEKTPILFQWFEARPERYGKGEVPILNTKEHPYLSNIINAAKIENERVIGVLVDGDFTYEQRKEFLSLEDEHQNIKIIYRENVDFSMYDKKLSDIYLENIHEQESYPASERDNYLLGLLREELKNIPYGKDSLIESYAEKRGHTWFDFFRNLAVLKGGGLFTETGKTGCHNISPCGGCIYLDADMIITDKLGVLYAPDGIAVYVDCNDNRKSLENGAIVVNRSNHPALLAGLDIMKSKVDAHPYYDGVGKGLKRHFNYSSLQDYNVFCNFIEFKHKNIIPNTSMYTNSSW.

A glycan (N-beta-linked (GlcNAc) arginine; by autocatalysis) is linked at Arg13. A UDP-N-acetyl-alpha-D-glucosamine-binding site is contributed by 48–50; it reads QWF. N-beta-linked (GlcNAc) arginine; by autocatalysis glycosylation occurs at Arg53. Tyr72 lines the UDP-N-acetyl-alpha-D-glucosamine pocket. Residue Arg159 is glycosylated (N-beta-linked (GlcNAc) arginine; by autocatalysis). 219–222 serves as a coordination point for UDP-N-acetyl-alpha-D-glucosamine; that stretch reads YLDA. Residues 221–223 carry the DXD motif motif; the sequence is DAD. Asp223 provides a ligand contact to Mn(2+). Glu253 functions as the Proton acceptor in the catalytic mechanism. The N-beta-linked (GlcNAc) arginine; by autocatalysis glycan is linked to Arg293. Residues Asn320 and Ser322 each contribute to the Mn(2+) site. Residues Ser322 and 327-329 contribute to the UDP-N-acetyl-alpha-D-glucosamine site; that span reads SSW.

Belongs to the glycosyltransferase NleB family. Mn(2+) is required as a cofactor. In terms of processing, auto-glycosylated: arginine GlcNAcylation is required for activity toward death domain-containing host target proteins.

The protein localises to the secreted. The protein resides in the host cell. The catalysed reaction is L-arginyl-[protein] + UDP-N-acetyl-alpha-D-glucosamine = N(omega)-(N-acetyl-beta-D-glucosaminyl)-L-arginyl-[protein] + UDP + H(+). In terms of biological role, protein-arginine N-acetylglucosaminyltransferase effector that disrupts TNF signaling in infected cells, including NF-kappa-B signaling, apoptosis and necroptosis. Acts by catalyzing the transfer of a single N-acetylglucosamine (GlcNAc) to a conserved arginine residue in the death domain of host proteins FADD, TNFRSF1A and RIPK1: arginine GlcNAcylation prevents homotypic/heterotypic death domain interactions and assembly of the oligomeric TNF-alpha receptor complex, thereby disrupting TNF signaling. Has preference for host FADD as substrate compared to TNFRSF1A and RIPK1. Also acts on host proteins without a death domain: catalyzes GlcNAcylation of host GAPDH protein, thereby preventing GAPDH interaction with TRAF2 and TRAF3, leading to inhibit NF-kappa-B signaling and type I interferon production, respectively. Also displays intra-bacterial activity by mediating GlcNAcylation of glutathione synthetase GshB. Catalyzes auto-GlcNAcylation, which is required for activity toward death domain-containing host target proteins. This Citrobacter rodentium protein is Protein-arginine N-acetylglucosaminyltransferase NleB.